The following is a 311-amino-acid chain: GTP cyclohydrolase FolE2 (311 aa).

This sequence belongs to the GTP cyclohydrolase IV family.

It carries out the reaction GTP + H2O = 7,8-dihydroneopterin 3'-triphosphate + formate + H(+). Its pathway is cofactor biosynthesis; 7,8-dihydroneopterin triphosphate biosynthesis; 7,8-dihydroneopterin triphosphate from GTP: step 1/1. Converts GTP to 7,8-dihydroneopterin triphosphate. This Xanthomonas campestris pv. campestris (strain B100) protein is GTP cyclohydrolase FolE2.